The primary structure comprises 372 residues: Carbamoyl phosphate synthase small chain (372 aa).

A CPSase region spans residues 1 to 179 (MRAILALEDG…ALVTGKTLPP (179 aa)). L-glutamine is bound by residues Ser-45, Gly-231, and Gly-233. The region spanning 183–369 (DIVAFDFGIK…RKMIAASKRQ (187 aa)) is the Glutamine amidotransferase type-1 domain. Catalysis depends on Cys-258, which acts as the Nucleophile. 5 residues coordinate L-glutamine: Leu-259, Gln-262, Asn-300, Gly-302, and Phe-303. Catalysis depends on residues His-342 and Glu-344.

Belongs to the CarA family. As to quaternary structure, composed of two chains; the small (or glutamine) chain promotes the hydrolysis of glutamine to ammonia, which is used by the large (or ammonia) chain to synthesize carbamoyl phosphate. Tetramer of heterodimers (alpha,beta)4.

The enzyme catalyses hydrogencarbonate + L-glutamine + 2 ATP + H2O = carbamoyl phosphate + L-glutamate + 2 ADP + phosphate + 2 H(+). The catalysed reaction is L-glutamine + H2O = L-glutamate + NH4(+). It participates in amino-acid biosynthesis; L-arginine biosynthesis; carbamoyl phosphate from bicarbonate: step 1/1. The protein operates within pyrimidine metabolism; UMP biosynthesis via de novo pathway; (S)-dihydroorotate from bicarbonate: step 1/3. Functionally, small subunit of the glutamine-dependent carbamoyl phosphate synthetase (CPSase). CPSase catalyzes the formation of carbamoyl phosphate from the ammonia moiety of glutamine, carbonate, and phosphate donated by ATP, constituting the first step of 2 biosynthetic pathways, one leading to arginine and/or urea and the other to pyrimidine nucleotides. The small subunit (glutamine amidotransferase) binds and cleaves glutamine to supply the large subunit with the substrate ammonia. The sequence is that of Carbamoyl phosphate synthase small chain from Akkermansia muciniphila (strain ATCC BAA-835 / DSM 22959 / JCM 33894 / BCRC 81048 / CCUG 64013 / CIP 107961 / Muc).